The primary structure comprises 63 residues: Putative flagellar calcium-binding protein (63 aa).

Over residues 1–11 (MGCISSKSTQT) the composition is skewed to polar residues. The interval 1-23 (MGCISSKSTQTGKKEGKTAAERK) is disordered. Residues 12-23 (GKKEGKTAAERK) show a composition bias toward basic and acidic residues. Residues 40 to 63 (EDKARRIELFKKFDKNNTGKLSME) enclose the EF-hand domain. Positions 53, 55, 57, and 59 each coordinate Ca(2+).

The protein belongs to the calflagin family.

It localises to the cell projection. Its subcellular location is the cilium. The protein localises to the flagellum. In Crithidia fasciculata, this protein is Putative flagellar calcium-binding protein (CABP).